A 352-amino-acid polypeptide reads, in one-letter code: SNF1-related protein kinase regulatory subunit gamma-like PV42a (352 aa).

4 CBS domains span residues Arg-24–Leu-106, Leu-122–Leu-196, Val-210–Thr-281, and Lys-297–Ser-352.

This sequence belongs to the 5'-AMP-activated protein kinase gamma subunit family. As to expression, expressed highly in rosette leaves, cauline leaves, open flowers, developing siliques and dry seeds, but at a low level in stems and floral buds.

Its function is as follows. Plays redundant role with PV42b in regulating male gametogenesis and pollen tube guidance. The protein is SNF1-related protein kinase regulatory subunit gamma-like PV42a (PV42A) of Arabidopsis thaliana (Mouse-ear cress).